We begin with the raw amino-acid sequence, 109 residues long: Flagellar hook-basal body complex protein FliE (109 aa).

It belongs to the FliE family.

The protein resides in the bacterial flagellum basal body. This Pseudomonas paraeruginosa (strain DSM 24068 / PA7) (Pseudomonas aeruginosa (strain PA7)) protein is Flagellar hook-basal body complex protein FliE.